The following is a 231-amino-acid chain: ATP phosphoribosyltransferase (231 aa).

The protein belongs to the ATP phosphoribosyltransferase family. Short subfamily. In terms of assembly, heteromultimer composed of HisG and HisZ subunits.

The protein localises to the cytoplasm. It catalyses the reaction 1-(5-phospho-beta-D-ribosyl)-ATP + diphosphate = 5-phospho-alpha-D-ribose 1-diphosphate + ATP. It functions in the pathway amino-acid biosynthesis; L-histidine biosynthesis; L-histidine from 5-phospho-alpha-D-ribose 1-diphosphate: step 1/9. Functionally, catalyzes the condensation of ATP and 5-phosphoribose 1-diphosphate to form N'-(5'-phosphoribosyl)-ATP (PR-ATP). Has a crucial role in the pathway because the rate of histidine biosynthesis seems to be controlled primarily by regulation of HisG enzymatic activity. The sequence is that of ATP phosphoribosyltransferase from Psychrobacter arcticus (strain DSM 17307 / VKM B-2377 / 273-4).